Reading from the N-terminus, the 265-residue chain is Hydroxyethylthiazole kinase 2 (265 aa).

Methionine 39 contributes to the substrate binding site. 2 residues coordinate ATP: lysine 115 and threonine 168. Glycine 195 provides a ligand contact to substrate.

Belongs to the Thz kinase family. The cofactor is Mg(2+).

The enzyme catalyses 5-(2-hydroxyethyl)-4-methylthiazole + ATP = 4-methyl-5-(2-phosphooxyethyl)-thiazole + ADP + H(+). Its pathway is cofactor biosynthesis; thiamine diphosphate biosynthesis; 4-methyl-5-(2-phosphoethyl)-thiazole from 5-(2-hydroxyethyl)-4-methylthiazole: step 1/1. Functionally, catalyzes the phosphorylation of the hydroxyl group of 4-methyl-5-beta-hydroxyethylthiazole (THZ). This is Hydroxyethylthiazole kinase 2 from Clostridium botulinum (strain Langeland / NCTC 10281 / Type F).